A 310-amino-acid chain; its full sequence is Malate dehydrogenase (310 aa).

Residues 7–12 (GAGNVG) and Asp32 contribute to the NAD(+) site. Substrate contacts are provided by Arg81 and Arg87. NAD(+) is bound by residues Asn94 and 117 to 119 (VSN). Substrate is bound by residues Asn119 and Arg150. His174 (proton acceptor) is an active-site residue.

The protein belongs to the LDH/MDH superfamily. MDH type 3 family. In terms of assembly, homotetramer; arranged as a dimer of dimers.

It catalyses the reaction (S)-malate + NAD(+) = oxaloacetate + NADH + H(+). Functionally, catalyzes the reversible oxidation of malate to oxaloacetate. This Prosthecochloris vibrioformis (Chlorobium vibrioforme) protein is Malate dehydrogenase.